Reading from the N-terminus, the 475-residue chain is Tubulin epsilon chain (475 aa).

148–154 (GGGTGSG) serves as a coordination point for GTP.

The protein belongs to the tubulin family. In terms of assembly, found in a complex with TEDC1, TEDC2, TUBE1 and TUBD1.

The protein localises to the cytoplasm. Its subcellular location is the cytoskeleton. It localises to the microtubule organizing center. It is found in the centrosome. This is Tubulin epsilon chain (TUBE1) from Homo sapiens (Human).